Consider the following 356-residue polypeptide: UDP-N-acetylglucosamine--N-acetylmuramyl-(pentapeptide) pyrophosphoryl-undecaprenol N-acetylglucosamine transferase (356 aa).

UDP-N-acetyl-alpha-D-glucosamine is bound by residues 12–14 (SGG), Asn-120, Arg-163, Ser-187, and Gln-286.

The protein belongs to the glycosyltransferase 28 family. MurG subfamily.

It localises to the cell inner membrane. The catalysed reaction is di-trans,octa-cis-undecaprenyl diphospho-N-acetyl-alpha-D-muramoyl-L-alanyl-D-glutamyl-meso-2,6-diaminopimeloyl-D-alanyl-D-alanine + UDP-N-acetyl-alpha-D-glucosamine = di-trans,octa-cis-undecaprenyl diphospho-[N-acetyl-alpha-D-glucosaminyl-(1-&gt;4)]-N-acetyl-alpha-D-muramoyl-L-alanyl-D-glutamyl-meso-2,6-diaminopimeloyl-D-alanyl-D-alanine + UDP + H(+). The protein operates within cell wall biogenesis; peptidoglycan biosynthesis. Its function is as follows. Cell wall formation. Catalyzes the transfer of a GlcNAc subunit on undecaprenyl-pyrophosphoryl-MurNAc-pentapeptide (lipid intermediate I) to form undecaprenyl-pyrophosphoryl-MurNAc-(pentapeptide)GlcNAc (lipid intermediate II). This is UDP-N-acetylglucosamine--N-acetylmuramyl-(pentapeptide) pyrophosphoryl-undecaprenol N-acetylglucosamine transferase from Pelagibacter ubique (strain HTCC1062).